The primary structure comprises 71 residues: Exodeoxyribonuclease 7 small subunit (71 aa).

The protein belongs to the XseB family. As to quaternary structure, heterooligomer composed of large and small subunits.

It is found in the cytoplasm. The enzyme catalyses Exonucleolytic cleavage in either 5'- to 3'- or 3'- to 5'-direction to yield nucleoside 5'-phosphates.. Its function is as follows. Bidirectionally degrades single-stranded DNA into large acid-insoluble oligonucleotides, which are then degraded further into small acid-soluble oligonucleotides. The protein is Exodeoxyribonuclease 7 small subunit of Streptococcus pyogenes serotype M1.